Consider the following 322-residue polypeptide: Probable arabinan endo-1,5-alpha-L-arabinosidase A (322 aa).

Residues 1–19 (MYLPTLAASASLLVGVAHG) form the signal peptide. Aspartate 34 acts as the Proton acceptor in catalysis. The active-site Proton donor is glutamate 201.

This sequence belongs to the glycosyl hydrolase 43 family.

The protein resides in the secreted. It catalyses the reaction Endohydrolysis of (1-&gt;5)-alpha-arabinofuranosidic linkages in (1-&gt;5)-arabinans.. It functions in the pathway glycan metabolism; L-arabinan degradation. Its function is as follows. Endo-1,5-alpha-L-arabinanase involved in degradation of pectin. Its preferred substrate is linear 1,5-alpha-L-arabinan. This is Probable arabinan endo-1,5-alpha-L-arabinosidase A (abnA) from Emericella nidulans (strain FGSC A4 / ATCC 38163 / CBS 112.46 / NRRL 194 / M139) (Aspergillus nidulans).